We begin with the raw amino-acid sequence, 300 residues long: Small ribosomal subunit protein uS4m (300 aa).

The 64-residue stretch at 146–209 (KRVDMVLLRS…MKRKLLKRLK (64 aa)) folds into the S4 RNA-binding domain.

Belongs to the universal ribosomal protein uS4 family.

Its subcellular location is the mitochondrion. This chain is Small ribosomal subunit protein uS4m (mrps4), found in Dictyostelium discoideum (Social amoeba).